Reading from the N-terminus, the 195-residue chain is MKNKSVIEEADDVRRAVEMVQLGARMQMLEVETRLSREKLLRIYKEVRGASPPKGMLPFSTDWFMTWQPNVHSSLFMNLYRYFTGPAGVHGLDAILKSYHLYLDHIETGVIEPALSLTRAWTLVRFFDADLLQMAACTRCGGEFVAHAHDPVHDYVCGLCNMPSRAGSARRKTTTRKAVAPTHKTTAASRKAVVA.

4 residues coordinate Zn(2+): C137, C140, C157, and C160. The interval R165–A195 is disordered.

This sequence belongs to the FlhC family. As to quaternary structure, heterohexamer composed of two FlhC and four FlhD subunits. Each FlhC binds a FlhD dimer, forming a heterotrimer, and a hexamer assembles by dimerization of two heterotrimers. It depends on Zn(2+) as a cofactor.

Its subcellular location is the cytoplasm. Its function is as follows. Functions in complex with FlhD as a master transcriptional regulator that regulates transcription of several flagellar and non-flagellar operons by binding to their promoter region. Activates expression of class 2 flagellar genes, including fliA, which is a flagellum-specific sigma factor that turns on the class 3 genes. Also regulates genes whose products function in a variety of physiological pathways. This is Flagellar transcriptional regulator FlhC from Thauera aminoaromatica.